Here is a 284-residue protein sequence, read N- to C-terminus: Tropomyosin beta chain (284 aa).

Met-1 is subject to N-acetylmethionine. The stretch at 1–284 (MEAIKKKMQM…DNALNDITSL (284 aa)) forms a coiled coil. Composition is skewed to basic and acidic residues over residues 22-40 (AEQA…KQLE) and 51-66 (KGTE…SVKE). The segment at 22–66 (AEQAEADKKQAEDRCKQLEEEQQGLQKKLKGTEDEVEKYSESVKE) is disordered.

This sequence belongs to the tropomyosin family. In terms of assembly, homodimer. Heterodimer of an alpha (TPM1, TPM3 or TPM4) and a beta (TPM2) chain.

Its subcellular location is the cytoplasm. The protein resides in the cytoskeleton. Its function is as follows. Binds to actin filaments in muscle and non-muscle cells. Plays a central role, in association with the troponin complex, in the calcium dependent regulation of vertebrate striated muscle contraction. Smooth muscle contraction is regulated by interaction with caldesmon. In non-muscle cells is implicated in stabilizing cytoskeleton actin filaments. The protein is Tropomyosin beta chain (TPM2) of Gallus gallus (Chicken).